The following is a 951-amino-acid chain: MASKRKSTTPCMIPVKTMVLPGASTEAQPVEPLPEGPQQDLPSEAPEASSEAAPNPSSTDGSALANGHRGTLDGYVYSCKECDFRSQDVTHFVGHMTSEHTDFNKDPHFVCTGCSFLAKTPEGLSLHNAKCHSGEASFLWNVTKPDNHVVVEQSVPENASSSVLAGESTEGTEIIITKTPIMKIMKGKAEAKKIHMLKENAPTQPGGEALPKPLAGETEGKEGDHTFINGATPVSQASANSTKPPHTANGPLIGTVPVLPAGIAQFLSLQQPTVHPQHHPHQPLPTSKALPKVMIPLSSIPTYNAAMDSNSFLKNSFHKFPYPTKAELCYLTVVTKYPEEQLKIWFTAQRLKQGISWSPEEIEDARKKMFNTVIQSVPQPTITVLNTPLVASAGNVQHLIQAALPGHAVGQPEGTAGGLLVTQPLMANGLQASSSSLPLTTASVPKPTAAPINTVCSNTTSAVKVVNAAQSLLTACPSITSQAFLDANIYKNKKSHEQLSALKGSFCRNQFPGQSEVEHLTKVTGLSTREVRKWFSDRRYHCRNLKGTRAMVPGEHGSVLIDSVPEVPFPLSSKVPEVPCVPTATSLVSHPATKRQSWHQTPDFTPTKYKERAPEQLRVLESSFAQNPLPPEEELDRLRSETKMTRREIDGWFSERRKRVNAEETKKADGHAPQEEAEGAEEEGRDEELASELRAPGENGSSEMFLSHTLAERKVSPIKINLKNLRVTEASGKSELPGMGMGVCEPEEDGLNKAVEQPPSRVSYKKTAQQRHLLRQLFVQTQWPSNQDYDSIMAQTGLPRPEVVRWFGDSRYALKNGQLKWYEDYKRGNFPPGLLVIAPGNRELLQDYYMTHKMLCEEDLQTLCEKTQMSAQQVKQWFAEKMGEETRAVADTSSEDQGPGHGEPVAVDKVLGDACAALSENSEAWEPSAPEAGSEPFDTSSPQSGRQLETD.

Residues 1–66 (MASKRKSTTP…SSTDGSALAN (66 aa)) form a disordered region. A compositionally biased stretch (low complexity) spans 42–58 (PSEAPEASSEAAPNPSS). 2 consecutive C2H2-type zinc fingers follow at residues 77–100 (YSCK…TSEH) and 109–132 (FVCT…AKCH). A disordered region spans residues 198–249 (KENAPTQPGGEALPKPLAGETEGKEGDHTFINGATPVSQASANSTKPPHTAN). Polar residues predominate over residues 232–244 (TPVSQASANSTKP). Residues 237–481 (ASANSTKPPH…LLTACPSITS (245 aa)) form a required for homodimerization and interaction with NFYA region. Residues 297-495 (LSSIPTYNAA…DANIYKNKKS (199 aa)) form a required for repressor activity region. 2 DNA-binding regions (homeobox) span residues 298-357 (SSIP…GISW) and 487-546 (ANIY…RNLK). The interval 490–548 (YKNKKSHEQLSALKGSFCRNQFPGQSEVEHLTKVTGLSTREVRKWFSDRRYHCRNLKGT) is required for nuclear localization. The residue at position 597 (S597) is a Phosphoserine. The homeobox 3 DNA-binding region spans 605 to 664 (TPTKYKERAPEQLRVLESSFAQNPLPPEEELDRLRSETKMTRREIDGWFSERRKRVNAEE). 2 disordered regions span residues 621–642 (ESSF…RSET) and 661–702 (NAEE…NGSS). Over residues 661-674 (NAEETKKADGHAPQ) the composition is skewed to basic and acidic residues. Positions 675 to 690 (EEAEGAEEEGRDEELA) are enriched in acidic residues. Residues S701 and S716 each carry the phosphoserine modification. DNA-binding regions (homeobox) lie at residues 759-818 (PSRV…KNGQ) and 830-889 (FPPG…TRAV). Residues 885-951 (ETRAVADTSS…PQSGRQLETD (67 aa)) are disordered. 2 positions are modified to phosphoserine: S922 and S941. The span at 937-951 (FDTSSPQSGRQLETD) shows a compositional bias: polar residues.

Belongs to the ZHX family. As to quaternary structure, homodimer (via homeobox domain 1). Heterodimer with ZHX1 (via homeobox domain 1). Heterodimer with ZHX2 (via homeobox domain 1). Heterodimerization with ZHX1 is a prerequisite for repressor activity. Interacts with NFYA. As to expression, widely expressed.

It localises to the cytoplasm. It is found in the nucleus. In terms of biological role, acts as a transcriptional repressor. Involved in the early stages of mesenchymal stem cell (MSC) osteogenic differentiation. Is a regulator of podocyte gene expression during primary glomerula disease. Binds to promoter DNA. This is Zinc fingers and homeoboxes protein 3 (Zhx3) from Rattus norvegicus (Rat).